We begin with the raw amino-acid sequence, 321 residues long: Cytochrome c biogenesis protein CcsA (321 aa).

7 consecutive transmembrane segments (helical) span residues 9-29 (ILTH…LITL), 44-64 (GMIA…VSSG), 68-88 (LSNL…LHTI), 143-163 (MLLS…LLII), 225-245 (VISL…VWAN), 259-273 (TWAF…IYLH), and 288-308 (VASI…LLGI).

This sequence belongs to the CcmF/CycK/Ccl1/NrfE/CcsA family. As to quaternary structure, may interact with Ccs1.

It is found in the plastid. The protein resides in the chloroplast thylakoid membrane. Functionally, required during biogenesis of c-type cytochromes (cytochrome c6 and cytochrome f) at the step of heme attachment. In Saccharum hybrid (Sugarcane), this protein is Cytochrome c biogenesis protein CcsA.